We begin with the raw amino-acid sequence, 156 residues long: ATP synthase subunit b (156 aa).

A helical membrane pass occupies residues 7 to 27 (LFVQAIVFLILVLFTMKFVWP).

This sequence belongs to the ATPase B chain family. As to quaternary structure, F-type ATPases have 2 components, F(1) - the catalytic core - and F(0) - the membrane proton channel. F(1) has five subunits: alpha(3), beta(3), gamma(1), delta(1), epsilon(1). F(0) has three main subunits: a(1), b(2) and c(10-14). The alpha and beta chains form an alternating ring which encloses part of the gamma chain. F(1) is attached to F(0) by a central stalk formed by the gamma and epsilon chains, while a peripheral stalk is formed by the delta and b chains.

It localises to the cell inner membrane. Functionally, f(1)F(0) ATP synthase produces ATP from ADP in the presence of a proton or sodium gradient. F-type ATPases consist of two structural domains, F(1) containing the extramembraneous catalytic core and F(0) containing the membrane proton channel, linked together by a central stalk and a peripheral stalk. During catalysis, ATP synthesis in the catalytic domain of F(1) is coupled via a rotary mechanism of the central stalk subunits to proton translocation. Its function is as follows. Component of the F(0) channel, it forms part of the peripheral stalk, linking F(1) to F(0). This is ATP synthase subunit b from Delftia acidovorans (strain DSM 14801 / SPH-1).